The sequence spans 153 residues: MTTLAFSYAVNLLSRREYSEFEIRCKMQEKAFSEQEIEDTLAQLQQKNWQSDKRFTENYLRARAQRGYGVNRIKQELRQLKGILPETVDEALMECDIDWSEIALNVLAKKFPDYRARQDAKNKQKIWRYMLSHGFFAEDFADFIGNGTEDEFY.

The protein belongs to the RecX family.

It is found in the cytoplasm. Modulates RecA activity. The sequence is that of Regulatory protein RecX from Mannheimia succiniciproducens (strain KCTC 0769BP / MBEL55E).